Here is a 288-residue protein sequence, read N- to C-terminus: Diaminopimelate epimerase (288 aa).

3 residues coordinate substrate: Asn13, Gln46, and Asn66. Cys75 (proton donor) is an active-site residue. Substrate contacts are provided by residues 76-77, Asn166, Asn199, and 217-218; these read GN and ER. The active-site Proton acceptor is the Cys226. 227–228 is a binding site for substrate; it reads GT.

This sequence belongs to the diaminopimelate epimerase family. In terms of assembly, homodimer.

The protein localises to the cytoplasm. The enzyme catalyses (2S,6S)-2,6-diaminopimelate = meso-2,6-diaminopimelate. The protein operates within amino-acid biosynthesis; L-lysine biosynthesis via DAP pathway; DL-2,6-diaminopimelate from LL-2,6-diaminopimelate: step 1/1. In terms of biological role, catalyzes the stereoinversion of LL-2,6-diaminopimelate (L,L-DAP) to meso-diaminopimelate (meso-DAP), a precursor of L-lysine and an essential component of the bacterial peptidoglycan. This Cupriavidus necator (strain ATCC 17699 / DSM 428 / KCTC 22496 / NCIMB 10442 / H16 / Stanier 337) (Ralstonia eutropha) protein is Diaminopimelate epimerase.